Here is a 213-residue protein sequence, read N- to C-terminus: Orotate phosphoribosyltransferase (213 aa).

Position 26 (Lys-26) interacts with 5-phospho-alpha-D-ribose 1-diphosphate. Orotate is bound at residue 34 to 35 (FF). 5-phospho-alpha-D-ribose 1-diphosphate is bound by residues 72–73 (YK), Arg-99, Lys-100, Lys-103, His-105, and 124–132 (DDVITAGTA). Orotate is bound by residues Thr-128 and Arg-156.

It belongs to the purine/pyrimidine phosphoribosyltransferase family. PyrE subfamily. In terms of assembly, homodimer. It depends on Mg(2+) as a cofactor.

The enzyme catalyses orotidine 5'-phosphate + diphosphate = orotate + 5-phospho-alpha-D-ribose 1-diphosphate. It participates in pyrimidine metabolism; UMP biosynthesis via de novo pathway; UMP from orotate: step 1/2. Catalyzes the transfer of a ribosyl phosphate group from 5-phosphoribose 1-diphosphate to orotate, leading to the formation of orotidine monophosphate (OMP). The polypeptide is Orotate phosphoribosyltransferase (Pseudomonas putida (strain GB-1)).